Consider the following 329-residue polypeptide: Elongation factor Ts (329 aa).

The tract at residues 79 to 82 is involved in Mg(2+) ion dislocation from EF-Tu; it reads TDFV.

This sequence belongs to the EF-Ts family.

Its subcellular location is the cytoplasm. Functionally, associates with the EF-Tu.GDP complex and induces the exchange of GDP to GTP. It remains bound to the aminoacyl-tRNA.EF-Tu.GTP complex up to the GTP hydrolysis stage on the ribosome. The chain is Elongation factor Ts from Phocaeicola vulgatus (strain ATCC 8482 / DSM 1447 / JCM 5826 / CCUG 4940 / NBRC 14291 / NCTC 11154) (Bacteroides vulgatus).